Reading from the N-terminus, the 243-residue chain is Uridylate kinase (243 aa).

An ATP-binding site is contributed by 14–17; that stretch reads KLSG. Gly57 lines the UMP pocket. ATP is bound by residues Gly58 and Arg62. UMP-binding positions include Asp77 and 139 to 146; that span reads TGRPYFTT. Positions 167, 173, and 176 each coordinate ATP.

The protein belongs to the UMP kinase family. In terms of assembly, homohexamer.

The protein resides in the cytoplasm. It catalyses the reaction UMP + ATP = UDP + ADP. It participates in pyrimidine metabolism; CTP biosynthesis via de novo pathway; UDP from UMP (UMPK route): step 1/1. Inhibited by UTP. Functionally, catalyzes the reversible phosphorylation of UMP to UDP. This is Uridylate kinase from Mycoplasmopsis pulmonis (strain UAB CTIP) (Mycoplasma pulmonis).